The sequence spans 334 residues: Probable peptidoglycan endopeptidase LytE (334 aa).

The signal sequence occupies residues Met-1–Ala-25. 3 consecutive LysM domains span residues Gln-26–Ile-69, Ser-86–Leu-129, and Ser-149–Val-192. Disordered regions lie at residues Asn-70–Lys-89, Gly-131–Val-153, and Thr-195–Ser-215. Composition is skewed to low complexity over residues Lys-72–Thr-87 and Ser-132–Val-153. The NlpC/P60 domain occupies Ser-217–Phe-334. The Nucleophile role is filled by Cys-247. His-296 (proton acceptor) is an active-site residue. His-308 is an active-site residue.

Belongs to the peptidase C40 family.

It is found in the secreted. Its subcellular location is the cell wall. Its function is as follows. Cell wall hydrolase that cleaves gamma-D-glutamate-meso-diaminopimelate bonds in peptidoglycan. Seems to play a role in cell separation during vegetative growth. The protein is Probable peptidoglycan endopeptidase LytE (lytE) of Bacillus subtilis (strain 168).